Here is a 134-residue protein sequence, read N- to C-terminus: Ribonuclease P protein component (134 aa).

Belongs to the RnpA family. Consists of a catalytic RNA component (M1 or rnpB) and a protein subunit.

The enzyme catalyses Endonucleolytic cleavage of RNA, removing 5'-extranucleotides from tRNA precursor.. Its function is as follows. RNaseP catalyzes the removal of the 5'-leader sequence from pre-tRNA to produce the mature 5'-terminus. It can also cleave other RNA substrates such as 4.5S RNA. The protein component plays an auxiliary but essential role in vivo by binding to the 5'-leader sequence and broadening the substrate specificity of the ribozyme. This Ectopseudomonas mendocina (strain ymp) (Pseudomonas mendocina) protein is Ribonuclease P protein component.